The primary structure comprises 198 residues: Alpha-S1-casein (198 aa).

Positions 1–15 are cleaved as a signal peptide; the sequence is MKLLILTCLVASAVA. Disordered regions lie at residues 28–47 and 71–97; these read QTQR…LKEE and SEST…EQKH. Phosphoserine is present on residues Ser-39, Ser-80, Ser-81, Ser-83, Ser-84, and Ser-85.

Belongs to the alpha-casein family. In terms of tissue distribution, mammary gland specific. Secreted in milk.

Its subcellular location is the secreted. Functionally, important role in the capacity of milk to transport calcium phosphate. The protein is Alpha-S1-casein (CSN1S1) of Cavia porcellus (Guinea pig).